A 1167-amino-acid polypeptide reads, in one-letter code: RNA-directed RNA polymerase (1167 aa).

A RdRp catalytic domain is found at 553–735 (LTYGILAEAT…KALASYTGLE (183 aa)).

It belongs to the reoviridae RNA-directed RNA polymerase family. In terms of assembly, interacts with VP3 (Potential). Interacts with VP2 (Potential). Interacts with NSP5; this interaction is probably necessary for the formation of functional virus factories.

Its subcellular location is the virion. The enzyme catalyses RNA(n) + a ribonucleoside 5'-triphosphate = RNA(n+1) + diphosphate. Functionally, RNA-directed RNA polymerase that is involved in both transcription and genome replication. Together with VP3 capping enzyme, forms an enzyme complex positioned near the channels situated at each of the five-fold vertices of the core. Following infection, the outermost layer of the virus is lost, leaving a double-layered particle (DLP) made up of the core and VP6 shell. VP1 then catalyzes the transcription of fully conservative plus-strand genomic RNAs that are extruded through the DLP's channels into the cytoplasm where they function as mRNAs for translation of viral proteins. One copy of each of the viral (+)RNAs is also recruited during core assembly, together with newly synthesized polymerase complexes and VP2. The polymerase of these novo-formed particles catalyzes the synthesis of complementary minus-strands leading to dsDNA formation. To do so, the polymerase specifically recognizes conserved 3' sequence(s) in plus-strand RNA templates. Once dsRNA synthesis is complete, the polymerase switches to the transcriptional mode, thus providing secondary transcription. This chain is RNA-directed RNA polymerase, found in Rotavirus X (strain RVX/Human/China/NADRV-J19/1997/GXP[X]) (RV ADRV-N).